The following is a 308-amino-acid chain: GMP synthase [glutamine-hydrolyzing] subunit B (308 aa).

The 182-residue stretch at 2–183 (LNPSDFIEEA…LGLPREMIQR (182 aa)) folds into the GMPS ATP-PPase domain. 29-35 (SGGVDSS) lines the ATP pocket.

Heterodimer composed of a glutamine amidotransferase subunit (A) and a GMP-binding subunit (B).

It carries out the reaction XMP + L-glutamine + ATP + H2O = GMP + L-glutamate + AMP + diphosphate + 2 H(+). The protein operates within purine metabolism; GMP biosynthesis; GMP from XMP (L-Gln route): step 1/1. Functionally, catalyzes the synthesis of GMP from XMP. The polypeptide is GMP synthase [glutamine-hydrolyzing] subunit B (guaAB) (Methanothermobacter thermautotrophicus (strain ATCC 29096 / DSM 1053 / JCM 10044 / NBRC 100330 / Delta H) (Methanobacterium thermoautotrophicum)).